The sequence spans 87 residues: Omega-lycotoxin-Am1g (87 aa).

A signal peptide spans 1–17 (MKLSIFFVLFFIAIAYC). Residues 18–40 (QPEFLDDEEDEVEETLPVAEEGR) constitute a propeptide that is removed on maturation. Cystine bridges form between cysteine 44–cysteine 59, cysteine 51–cysteine 64, cysteine 58–cysteine 84, and cysteine 66–cysteine 82.

It belongs to the neurotoxin omega-lctx family. As to expression, expressed by the venom gland.

Its subcellular location is the secreted. In terms of biological role, modulates Cav2.1/CACNA1A voltage-gated calcium channels (P/Q-type currents) in rat cerebellar Purkinje cells and hippocampal CA1-CA3 neurons. At saturating concentrations (&gt;10 nM) decelerates activation kinetics and slightly increases peak amplitude without affecting deactivation kinetics. In vivo, does not cause death when intravenously injected into mice. In rat models, through its activity on Cav2.1/CACNA1A, has an ameliorative effect on memory defects provoked by hyperstimulation of N-methyl-D-aspartate receptors (NMDARs) in the hippocampus. This is Omega-lycotoxin-Am1g from Alopecosa marikovskyi (Wolf spider).